A 449-amino-acid polypeptide reads, in one-letter code: MGKYFGTDGVRGEANVELTPELAFKLGRFGGYVLSQHETDVPRVFVARDTRISGQMLEAALIAGLLSVGIHVYKLGVLATPGVAHLVKTEKASAGVMISASHNPAQDNGIKFFAGDGFKLDDALEAEIEALLDAEEDTLPRPSAQGLGDVVEYPEGLRKYQQFLVSTGTDLDGMKVALDTANGAAATSARQIFVDLGADLTVMAEKPDGLNINEGVGSTHPEKLQELVKETGSQIGLAFDGDSDRLIAVDENGVLVDGDRIMYIVGKYLADRGLLAKNTIVTTVMSNLGFHKALDREGIEKAVTAVGDRYVVEEMRKEGYNVGGEQSGHVILMDYNTTGDGQLTAVQLTKIMKETGKKLSELAAEVTIYPQKLVNIRVENSMKDKAMEVPAIAAIIEKMEAEMAGNGRILVRPSGTEPLLRVMAEAPTDAEVDYYVDTIADVVRAEIGS.

Residue Ser101 is the Phosphoserine intermediate of the active site. Mg(2+)-binding residues include Ser101, Asp240, Asp242, and Asp244. The residue at position 101 (Ser101) is a Phosphoserine.

The protein belongs to the phosphohexose mutase family. The cofactor is Mg(2+). Post-translationally, activated by phosphorylation.

It carries out the reaction alpha-D-glucosamine 1-phosphate = D-glucosamine 6-phosphate. Catalyzes the conversion of glucosamine-6-phosphate to glucosamine-1-phosphate. The protein is Phosphoglucosamine mutase of Streptococcus suis (strain 98HAH33).